The sequence spans 124 residues: Period circadian protein (124 aa).

The interval 30–124 is disordered; the sequence is TAPVELDPPK…TVTLTESLLN (95 aa). The span at 71–96 shows a compositional bias: low complexity; the sequence is SGNFTTGSNVRMSSVTNTSNAGTGTS. The segment covering 97-107 has biased composition (gly residues); sequence SAGGNGNGGSG.

In terms of assembly, forms a heterodimer with timeless (TIM); the complex then translocates into the nucleus. Phosphorylated with a circadian rhythmicity, probably by the double-time protein (dbt). Phosphorylation could be implicated in the stability of per monomer and in the formation of heterodimer per-tim.

It is found in the nucleus. The protein localises to the cytoplasm. It localises to the perinuclear region. Functionally, essential for biological clock functions. Determines the period length of circadian and ultradian rhythms; an increase in PER dosage leads to shortened circadian rhythms and a decrease leads to lengthened circadian rhythms. Essential for the circadian rhythmicity of locomotor activity, eclosion behavior, and for the rhythmic component of the male courtship song that originates in the thoracic nervous system. The biological cycle depends on the rhythmic formation and nuclear localization of the TIM-PER complex. Light induces the degradation of TIM, which promotes elimination of PER. Nuclear activity of the heterodimer coordinatively regulates PER and TIM transcription through a negative feedback loop. Behaves as a negative element in circadian transcriptional loop. Does not appear to bind DNA, suggesting indirect transcriptional inhibition. The polypeptide is Period circadian protein (per) (Hirtodrosophila pictiventris (Fruit fly)).